The primary structure comprises 433 residues: Serine hydroxymethyltransferase (433 aa).

(6S)-5,6,7,8-tetrahydrofolate contacts are provided by residues L132 and 136–138; that span reads GHL. K241 is subject to N6-(pyridoxal phosphate)lysine.

This sequence belongs to the SHMT family. Homodimer. Pyridoxal 5'-phosphate is required as a cofactor.

The protein resides in the cytoplasm. The catalysed reaction is (6R)-5,10-methylene-5,6,7,8-tetrahydrofolate + glycine + H2O = (6S)-5,6,7,8-tetrahydrofolate + L-serine. It functions in the pathway one-carbon metabolism; tetrahydrofolate interconversion. The protein operates within amino-acid biosynthesis; glycine biosynthesis; glycine from L-serine: step 1/1. In terms of biological role, catalyzes the reversible interconversion of serine and glycine with tetrahydrofolate (THF) serving as the one-carbon carrier. This reaction serves as the major source of one-carbon groups required for the biosynthesis of purines, thymidylate, methionine, and other important biomolecules. Also exhibits THF-independent aldolase activity toward beta-hydroxyamino acids, producing glycine and aldehydes, via a retro-aldol mechanism. This is Serine hydroxymethyltransferase from Rhodopseudomonas palustris (strain HaA2).